Consider the following 105-residue polypeptide: MALPQLTDEQRAAALEKAAAARRARAELKDRLKRGGTNLTQVLKDAESDEVLGKMKVSALLEALPKVGKVKAQEIMTELEIAPTRRLRGLGDRQRKALLEKFGSA.

An H2TH motif, binds DNA motif is present at residues 64–71 (LPKVGKVK). Residues 82-94 (APTRRLRGLGDRQ) are lid, binds DNA.

The protein belongs to the actinobacterial IHF (aIHF) family. Homodimer in solution. Binds DNA as a monomer.

It is found in the cytoplasm. In terms of biological role, a nucleoid-associated protein (NAP) required for septum formation and normal cell division as well as for DNA segregation. Binds about 135 sites across the chromosome, most of which are genes involved in virulence; most DNA-binding sites are immediately upstream of transcription start sites. When mIHF is depleted most of the genes are down-regulated. Binds supercoiled and linear dsDNA in a concentration-dependent manner, probably non-sequence specifically. Binding compacts DNA, protecting it from degradation. Initial binding to supercoiled DNA opens it fully, followed by bending and compaction. Bends and thus compacts linear DNA. Binds DNA via 2 sites, forms left-handed loops on linear DNA; at low concentrations unwinds larger cosmids (42.6 kb) then collapses and condenses DNA as protein levels rise. Forms mostly left-handed loops on condensing cosmid DNA. In Mycobacterium tuberculosis (strain ATCC 25618 / H37Rv), this protein is Integration host factor.